A 117-amino-acid polypeptide reads, in one-letter code: Protein YchN (117 aa).

It to M.jannaschii MJ0989. As to quaternary structure, homohexamer. The hexamer is formed by a dimer of trimers.

The chain is Protein YchN (ychN) from Escherichia coli O157:H7.